A 94-amino-acid polypeptide reads, in one-letter code: Aspartyl/glutamyl-tRNA(Asn/Gln) amidotransferase subunit C (94 aa).

The protein belongs to the GatC family. As to quaternary structure, heterotrimer of A, B and C subunits.

The catalysed reaction is L-glutamyl-tRNA(Gln) + L-glutamine + ATP + H2O = L-glutaminyl-tRNA(Gln) + L-glutamate + ADP + phosphate + H(+). It catalyses the reaction L-aspartyl-tRNA(Asn) + L-glutamine + ATP + H2O = L-asparaginyl-tRNA(Asn) + L-glutamate + ADP + phosphate + 2 H(+). Its function is as follows. Allows the formation of correctly charged Asn-tRNA(Asn) or Gln-tRNA(Gln) through the transamidation of misacylated Asp-tRNA(Asn) or Glu-tRNA(Gln) in organisms which lack either or both of asparaginyl-tRNA or glutaminyl-tRNA synthetases. The reaction takes place in the presence of glutamine and ATP through an activated phospho-Asp-tRNA(Asn) or phospho-Glu-tRNA(Gln). The protein is Aspartyl/glutamyl-tRNA(Asn/Gln) amidotransferase subunit C of Heliobacterium modesticaldum (strain ATCC 51547 / Ice1).